The sequence spans 407 residues: Tryptophan synthase beta chain (407 aa).

K98 is modified (N6-(pyridoxal phosphate)lysine).

It belongs to the TrpB family. In terms of assembly, tetramer of two alpha and two beta chains. Requires pyridoxal 5'-phosphate as cofactor.

It catalyses the reaction (1S,2R)-1-C-(indol-3-yl)glycerol 3-phosphate + L-serine = D-glyceraldehyde 3-phosphate + L-tryptophan + H2O. It functions in the pathway amino-acid biosynthesis; L-tryptophan biosynthesis; L-tryptophan from chorismate: step 5/5. Functionally, the beta subunit is responsible for the synthesis of L-tryptophan from indole and L-serine. The sequence is that of Tryptophan synthase beta chain from Bradyrhizobium sp. (strain BTAi1 / ATCC BAA-1182).